Here is a 274-residue protein sequence, read N- to C-terminus: Penicillin-insensitive murein endopeptidase (274 aa).

The N-terminal stretch at 1-19 is a signal peptide; that stretch reads MNKTAIALLALLASSASLA. 3 cysteine pairs are disulfide-bonded: C44–C265, C187–C235, and C216–C223. 6 residues coordinate Zn(2+): H110, H113, D120, D147, H150, and H211. The interval 227–274 is disordered; that stretch reads PLPPPGDGCGAELQSWFEPPKPGTTKPEKKTPPPLPPSCQALLDEHVI.

It belongs to the peptidase M74 family. In terms of assembly, dimer. Zn(2+) serves as cofactor.

Its subcellular location is the periplasm. Functionally, murein endopeptidase that cleaves the D-alanyl-meso-2,6-diamino-pimelyl amide bond that connects peptidoglycan strands. Likely plays a role in the removal of murein from the sacculus. This is Penicillin-insensitive murein endopeptidase from Escherichia coli (strain ATCC 8739 / DSM 1576 / NBRC 3972 / NCIMB 8545 / WDCM 00012 / Crooks).